The primary structure comprises 172 residues: Translation initiation factor IF-3 (172 aa).

This sequence belongs to the IF-3 family. Monomer.

Its subcellular location is the cytoplasm. In terms of biological role, IF-3 binds to the 30S ribosomal subunit and shifts the equilibrium between 70S ribosomes and their 50S and 30S subunits in favor of the free subunits, thus enhancing the availability of 30S subunits on which protein synthesis initiation begins. The chain is Translation initiation factor IF-3 from Sulfurimonas denitrificans (strain ATCC 33889 / DSM 1251) (Thiomicrospira denitrificans (strain ATCC 33889 / DSM 1251)).